The following is a 252-amino-acid chain: Tabtoxin biosynthesis enzyme (252 aa).

Positions Met-1–Asn-23 are disordered.

In terms of biological role, may play a role in tabtoxin biosynthesis. The sequence is that of Tabtoxin biosynthesis enzyme (tblA) from Pseudomonas amygdali pv. tabaci (Pseudomonas syringae pv. tabaci).